A 659-amino-acid chain; its full sequence is Putative oxidoreductase AegA (659 aa).

4Fe-4S ferredoxin-type domains are found at residues 3-22 (RFIMANSQQCLGCHACEIAC), 47-77 (HQQQRSAVTCHHCEDAPCARSCPNGAISHVD), 78-107 (DSIQVNQQKCIGCKSCVVACPFGTMQIVLT), 114-147 (VKATAHKCDLCAGRENGPACVENCPADALQLVTD), and 218-252 (DQAQREASRCLKCGEHSVCEWTCPLHNHIPQWIEL). Residues cysteine 12, cysteine 15, cysteine 18, cysteine 22, cysteine 56, cysteine 59, cysteine 64, cysteine 68, cysteine 87, cysteine 90, cysteine 93, cysteine 97, cysteine 121, cysteine 124, cysteine 133, cysteine 137, cysteine 227, cysteine 230, cysteine 236, and cysteine 240 each contribute to the [4Fe-4S] cluster site.

[4Fe-4S] cluster serves as cofactor.

Involved in formate-dependent uric acid degradation under microaerobic and anaerobic conditions. May reduce the enzymes necessary for uric acid degradation. This Escherichia coli (strain K12) protein is Putative oxidoreductase AegA.